The following is a 252-amino-acid chain: Spermatogenesis-associated protein 9 (252 aa).

A helical transmembrane segment spans residues 145 to 167; it reads TSIMYASYAALIYLAVCVNAVLA. Residues 208–221 are compositionally biased toward basic and acidic residues; that stretch reads KAKPYRSLPEKPDN. The segment at 208–235 is disordered; sequence KAKPYRSLPEKPDNLLDQPKPPANKQSN.

The protein localises to the membrane. Functionally, may play at role in testicular development/spermatogenesis and may be an important factor in male infertility. The chain is Spermatogenesis-associated protein 9 (Spata9) from Mus musculus (Mouse).